Reading from the N-terminus, the 607-residue chain is Albumin (607 aa).

A signal peptide spans Met1–Ser18. Positions Arg19–Arg24 are excised as a propeptide. Albumin domains are found at residues Arg19–Lys209, Glu210–Pro402, and Leu403–Ala600. His27 lines the Cu cation pocket. A Phosphoserine modification is found at Ser29. Ca(2+)-binding residues include Glu30 and Asp37. A disulfide bond links Cys77 and Cys86. Phosphoserine occurs at positions 82 and 89. His91 serves as a coordination point for Zn(2+). Intrachain disulfides connect Cys99–Cys115, Cys114–Cys125, Cys147–Cys192, Cys191–Cys200, Cys223–Cys269, and Cys268–Cys276. Residue Thr107 is modified to Phosphothreonine. Glu267 contributes to the Ca(2+) binding site. Zn(2+) is bound by residues His270 and Asp272. Residues Asp272, Glu275, Asp278, and Asp282 each coordinate Ca(2+). Disulfide bonds link Cys288–Cys302, Cys301–Cys312, Cys339–Cys384, Cys383–Cys392, Cys415–Cys461, Cys460–Cys471, Cys484–Cys500, and Cys499–Cys510. A Phosphoserine modification is found at Ser442. Phosphothreonine is present on residues Thr443 and Thr445. Ser512 carries the post-translational modification Phosphoserine. 2 disulfides stabilise this stretch: Cys537-Cys582 and Cys581-Cys590. At Lys557 the chain carries N6-methyllysine. Phosphothreonine is present on Thr569. Lys587 carries the post-translational modification N6-succinyllysine.

Belongs to the ALB/AFP/VDB family. As to quaternary structure, interacts with FCGRT; this interaction regulates ALB homeostasis. Interacts with TASOR. In plasma, occurs in a covalently-linked complex with chromophore-bound alpha-1-microglobulin; this interaction does not prevent fatty acid binding to ALB. Post-translationally, phosphorylated by FAM20C in the extracellular medium. Plasma.

Its subcellular location is the secreted. Functionally, binds water, Ca(2+), Na(+), K(+), fatty acids, hormones, bilirubin and drugs. Its main function is the regulation of the colloidal osmotic pressure of blood. Major zinc transporter in plasma, typically binds about 80% of all plasma zinc. Major calcium and magnesium transporter in plasma, binds approximately 45% of circulating calcium and magnesium in plasma. Potentially has more than two calcium-binding sites and might additionally bind calcium in a non-specific manner. The shared binding site between zinc and calcium at residue Asp-272 suggests a crosstalk between zinc and calcium transport in the blood. The rank order of affinity is zinc &gt; calcium &gt; magnesium. Binds to the bacterial siderophore enterobactin and inhibits enterobactin-mediated iron uptake of E.coli from ferric transferrin, and may thereby limit the utilization of iron and growth of enteric bacteria such as E.coli. Does not prevent iron uptake by the bacterial siderophore aerobactin. This Equus caballus (Horse) protein is Albumin (ALB).